Consider the following 1384-residue polypeptide: DNA-directed RNA polymerase subunit beta'' (1384 aa).

Residues C224, C297, C304, and C307 each contribute to the Zn(2+) site.

This sequence belongs to the RNA polymerase beta' chain family. RpoC2 subfamily. In plastids the minimal PEP RNA polymerase catalytic core is composed of four subunits: alpha, beta, beta', and beta''. When a (nuclear-encoded) sigma factor is associated with the core the holoenzyme is formed, which can initiate transcription. Zn(2+) serves as cofactor.

The protein localises to the plastid. The protein resides in the chloroplast. It catalyses the reaction RNA(n) + a ribonucleoside 5'-triphosphate = RNA(n+1) + diphosphate. Functionally, DNA-dependent RNA polymerase catalyzes the transcription of DNA into RNA using the four ribonucleoside triphosphates as substrates. The sequence is that of DNA-directed RNA polymerase subunit beta'' from Sinapis alba (White mustard).